The following is a 178-amino-acid chain: ATP synthase subunit delta (178 aa).

The protein belongs to the ATPase delta chain family. In terms of assembly, F-type ATPases have 2 components, F(1) - the catalytic core - and F(0) - the membrane proton channel. F(1) has five subunits: alpha(3), beta(3), gamma(1), delta(1), epsilon(1). F(0) has three main subunits: a(1), b(2) and c(10-14). The alpha and beta chains form an alternating ring which encloses part of the gamma chain. F(1) is attached to F(0) by a central stalk formed by the gamma and epsilon chains, while a peripheral stalk is formed by the delta and b chains.

The protein localises to the cell membrane. Functionally, f(1)F(0) ATP synthase produces ATP from ADP in the presence of a proton or sodium gradient. F-type ATPases consist of two structural domains, F(1) containing the extramembraneous catalytic core and F(0) containing the membrane proton channel, linked together by a central stalk and a peripheral stalk. During catalysis, ATP synthesis in the catalytic domain of F(1) is coupled via a rotary mechanism of the central stalk subunits to proton translocation. Its function is as follows. This protein is part of the stalk that links CF(0) to CF(1). It either transmits conformational changes from CF(0) to CF(1) or is implicated in proton conduction. In Anoxybacillus flavithermus (strain DSM 21510 / WK1), this protein is ATP synthase subunit delta.